Here is a 275-residue protein sequence, read N- to C-terminus: Ribosomal RNA small subunit methyltransferase A (275 aa).

6 residues coordinate S-adenosyl-L-methionine: N28, L30, G55, E77, D103, and N123.

The protein belongs to the class I-like SAM-binding methyltransferase superfamily. rRNA adenine N(6)-methyltransferase family. RsmA subfamily.

The protein resides in the cytoplasm. The catalysed reaction is adenosine(1518)/adenosine(1519) in 16S rRNA + 4 S-adenosyl-L-methionine = N(6)-dimethyladenosine(1518)/N(6)-dimethyladenosine(1519) in 16S rRNA + 4 S-adenosyl-L-homocysteine + 4 H(+). Functionally, specifically dimethylates two adjacent adenosines (A1518 and A1519) in the loop of a conserved hairpin near the 3'-end of 16S rRNA in the 30S particle. May play a critical role in biogenesis of 30S subunits. The sequence is that of Ribosomal RNA small subunit methyltransferase A from Rhizobium etli (strain CIAT 652).